Here is a 359-residue protein sequence, read N- to C-terminus: UPF0496 protein At3g57100 (359 aa).

Residues 179–208 adopt a coiled-coil conformation; that stretch reads HEELAKMVVKLEKTMKDIDKKLRRVRGRRA. Residues 214 to 234 form a helical membrane-spanning segment; it reads LLAPVIAVIFLSKLVAGLVPI.

It belongs to the UPF0496 family.

It localises to the membrane. In Arabidopsis thaliana (Mouse-ear cress), this protein is UPF0496 protein At3g57100.